A 142-amino-acid polypeptide reads, in one-letter code: Hemoglobin subunit alpha (142 aa).

The Globin domain occupies 2 to 142; that stretch reads VLSDANKQEI…LVHQLSSKYR (141 aa). Histidine 60 serves as a coordination point for O2. Histidine 89 is a heme b binding site.

Belongs to the globin family. As to quaternary structure, heterotetramer of two alpha chains and two beta chains. Red blood cells.

Functionally, involved in oxygen transport from gills to the various peripheral tissues. This is Hemoglobin subunit alpha (HBA) from Bathyraja eatonii (Eaton's skate).